The chain runs to 51 residues: Large ribosomal subunit protein eL39 (51 aa).

Belongs to the eukaryotic ribosomal protein eL39 family.

This chain is Large ribosomal subunit protein eL39 (RpL39), found in Plutella xylostella (Diamondback moth).